Reading from the N-terminus, the 507-residue chain is Rhamnogalacturonase A (507 aa).

A signal peptide spans 1–21 (MYVSRLLLFLAPLLVKGQLSG). Cys-38 and Cys-64 form a disulfide bridge. The active-site Proton donor is Asp-215. A disulfide bridge links Cys-217 with Cys-234. The N-linked (GlcNAc...) asparagine glycan is linked to Asn-235. Residue His-290 is part of the active site. The N-linked (GlcNAc...) asparagine glycan is linked to Asn-317. Disulfide bonds link Cys-340/Cys-346 and Cys-368/Cys-377. A compositionally biased stretch (low complexity) spans 462-491 (SPATSSPTATSTAISSVDPVSAATTTATSH). The disordered stretch occupies residues 462 to 507 (SPATSSPTATSTAISSVDPVSAATTTATSHGHGKSHHKHQCRAHRH). A compositionally biased stretch (basic residues) spans 492–507 (GHGKSHHKHQCRAHRH).

Belongs to the glycosyl hydrolase 28 family.

It localises to the secreted. It carries out the reaction Endohydrolysis of alpha-D-GalA-(1-&gt;2)-alpha-L-Rha glycosidic bond in the rhamnogalacturonan I backbone with initial inversion of anomeric configuration releasing oligosaccharides with beta-D-GalA at the reducing end.. Functionally, pectinolytic enzymes consist of four classes of enzymes: pectine lyase, polygalacturonase, pectin methylesterase and rhamnogalacturonase. Hydrolyzes alpha-D-galacturonopyranosyl-(1,2)-alpha-L-rhamnopyranosyl linkages in the backbone of the hairy regions of pectins. Active against linseed rhamnogalacturonan. The polypeptide is Rhamnogalacturonase A (rhgA) (Emericella nidulans (strain FGSC A4 / ATCC 38163 / CBS 112.46 / NRRL 194 / M139) (Aspergillus nidulans)).